Reading from the N-terminus, the 374-residue chain is Phosphatidylglycerol--prolipoprotein diacylglyceryl transferase (374 aa).

4 consecutive transmembrane segments (helical) span residues 33–53 (ICFI…IALF), 155–175 (LCWF…VFFY), 195–215 (LASH…TSYI), and 222–242 (LSFL…AVFI). Arg243 lines the a 1,2-diacyl-sn-glycero-3-phospho-(1'-sn-glycerol) pocket. 3 helical membrane passes run 279–299 (PVQL…FTLW), 306–326 (LAAG…RFLL), and 341–361 (ILQM…CLVW).

This sequence belongs to the Lgt family.

It localises to the cell inner membrane. It carries out the reaction L-cysteinyl-[prolipoprotein] + a 1,2-diacyl-sn-glycero-3-phospho-(1'-sn-glycerol) = an S-1,2-diacyl-sn-glyceryl-L-cysteinyl-[prolipoprotein] + sn-glycerol 1-phosphate + H(+). The protein operates within protein modification; lipoprotein biosynthesis (diacylglyceryl transfer). Catalyzes the transfer of the diacylglyceryl group from phosphatidylglycerol to the sulfhydryl group of the N-terminal cysteine of a prolipoprotein, the first step in the formation of mature lipoproteins. This is Phosphatidylglycerol--prolipoprotein diacylglyceryl transferase from Protochlamydia amoebophila (strain UWE25).